The sequence spans 97 residues: Citrate lyase acyl carrier protein (97 aa).

The residue at position 14 (serine 14) is an O-(phosphoribosyl dephospho-coenzyme A)serine.

The protein belongs to the CitD family. As to quaternary structure, oligomer with a subunit composition of (alpha,beta,gamma)6.

The protein resides in the cytoplasm. Covalent carrier of the coenzyme of citrate lyase. The sequence is that of Citrate lyase acyl carrier protein from Klebsiella pneumoniae subsp. pneumoniae (strain ATCC 700721 / MGH 78578).